The primary structure comprises 475 residues: UDP-N-acetylmuramate--L-alanine ligase (475 aa).

Gly125 to Thr131 lines the ATP pocket.

This sequence belongs to the MurCDEF family.

The protein resides in the cytoplasm. It carries out the reaction UDP-N-acetyl-alpha-D-muramate + L-alanine + ATP = UDP-N-acetyl-alpha-D-muramoyl-L-alanine + ADP + phosphate + H(+). Its pathway is cell wall biogenesis; peptidoglycan biosynthesis. Its function is as follows. Cell wall formation. In Haemophilus influenzae (strain PittGG), this protein is UDP-N-acetylmuramate--L-alanine ligase.